A 522-amino-acid polypeptide reads, in one-letter code: Lysine--tRNA ligase (522 aa).

The 'HIGH' region signature appears at 44-52 (PSGLPHIGT). The short motif at 290–294 (KISKS) is the 'KMSKS' region element. Lysine 293 contacts ATP.

The protein belongs to the class-I aminoacyl-tRNA synthetase family.

The protein localises to the cytoplasm. It carries out the reaction tRNA(Lys) + L-lysine + ATP = L-lysyl-tRNA(Lys) + AMP + diphosphate. The protein is Lysine--tRNA ligase of Rickettsia massiliae (strain Mtu5).